The primary structure comprises 313 residues: Secretory carrier-associated membrane protein 4 (313 aa).

A disordered region spans residues 1–69 (MAGRSRYDNP…LPPEPADFYN (69 aa)). The Cytoplasmic segment spans residues 1–148 (MAGRSRYDNP…EIPVHLQRTQ (148 aa)). A coiled-coil region spans residues 85-116 (MKTREKELLAKEAELNRREKEIKRREEAAARA). The next 4 membrane-spanning stretches (helical) occupy residues 149 to 169 (YVAF…IICV), 181 to 201 (IWFL…YLWY), 216 to 236 (FGWF…AAVS), and 255 to 275 (LIGN…MFCL). The Cytoplasmic portion of the chain corresponds to 276-313 (ESLLSMWVIQRVYLYFRGSGKEAEMKREAARSAARAAF).

It belongs to the SCAMP family.

It is found in the cell membrane. Its subcellular location is the cytoplasmic vesicle. It localises to the secretory vesicle membrane. Its function is as follows. Probably involved in membrane trafficking. The protein is Secretory carrier-associated membrane protein 4 (SCAMP4) of Oryza sativa subsp. japonica (Rice).